We begin with the raw amino-acid sequence, 145 residues long: Large ribosomal subunit protein mL59 (145 aa).

Residues 123–135 (LKKTSKFKNERQK) are compositionally biased toward basic and acidic residues. The tract at residues 123–145 (LKKTSKFKNERQKASKIAKPSPF) is disordered.

The protein belongs to the mitochondrion-specific ribosomal protein mL59 family. Component of the mitochondrial large ribosomal subunit (mt-LSU). Mature yeast 74S mitochondrial ribosomes consist of a small (37S) and a large (54S) subunit. The 37S small subunit contains a 15S ribosomal RNA (15S mt-rRNA) and at least 32 different proteins. The 54S large subunit contains a 21S rRNA (21S mt-rRNA) and at least 45 different proteins.

It localises to the mitochondrion. In terms of biological role, component of the mitochondrial ribosome (mitoribosome), a dedicated translation machinery responsible for the synthesis of mitochondrial genome-encoded proteins, including at least some of the essential transmembrane subunits of the mitochondrial respiratory chain. The mitoribosomes are attached to the mitochondrial inner membrane and translation products are cotranslationally integrated into the membrane. The sequence is that of Large ribosomal subunit protein mL59 (mrpl25) from Schizosaccharomyces pombe (strain 972 / ATCC 24843) (Fission yeast).